The chain runs to 428 residues: Chaperone SurA (428 aa).

The signal sequence occupies residues Met1–Ala13. PpiC domains are found at residues Ser164–Glu265 and Arg276–Gly375.

The protein localises to the periplasm. It catalyses the reaction [protein]-peptidylproline (omega=180) = [protein]-peptidylproline (omega=0). In terms of biological role, chaperone involved in the correct folding and assembly of outer membrane proteins. Recognizes specific patterns of aromatic residues and the orientation of their side chains, which are found more frequently in integral outer membrane proteins. May act in both early periplasmic and late outer membrane-associated steps of protein maturation. The protein is Chaperone SurA of Pseudomonas savastanoi pv. phaseolicola (strain 1448A / Race 6) (Pseudomonas syringae pv. phaseolicola (strain 1448A / Race 6)).